We begin with the raw amino-acid sequence, 110 residues long: Phosphoribosyl-ATP pyrophosphatase (110 aa).

The protein belongs to the PRA-PH family.

The protein localises to the cytoplasm. It catalyses the reaction 1-(5-phospho-beta-D-ribosyl)-ATP + H2O = 1-(5-phospho-beta-D-ribosyl)-5'-AMP + diphosphate + H(+). It participates in amino-acid biosynthesis; L-histidine biosynthesis; L-histidine from 5-phospho-alpha-D-ribose 1-diphosphate: step 2/9. The sequence is that of Phosphoribosyl-ATP pyrophosphatase from Pseudomonas savastanoi pv. phaseolicola (strain 1448A / Race 6) (Pseudomonas syringae pv. phaseolicola (strain 1448A / Race 6)).